The primary structure comprises 162 residues: Flagellar assembly factor FliW (162 aa).

Belongs to the FliW family. Interacts with translational regulator CsrA and flagellin(s).

The protein resides in the cytoplasm. Acts as an anti-CsrA protein, binds CsrA and prevents it from repressing translation of its target genes, one of which is flagellin. Binds to flagellin and participates in the assembly of the flagellum. This Magnetococcus marinus (strain ATCC BAA-1437 / JCM 17883 / MC-1) protein is Flagellar assembly factor FliW.